The primary structure comprises 476 residues: Probable periplasmic serine endoprotease DegP-like (476 aa).

The signal sequence occupies residues 1–27 (MSIPRLKSYFTILATVLVLGQAVSAQA). Active-site charge relay system residues include His-116, Asp-146, and Ser-219. Residues 217-219 (GNS) and 274-278 (LGVVI) contribute to the substrate site. 2 consecutive PDZ domains span residues 263-354 (LKTG…IRDG) and 360-465 (ELTV…LRQG).

Belongs to the peptidase S1C family.

It is found in the periplasm. It catalyses the reaction Acts on substrates that are at least partially unfolded. The cleavage site P1 residue is normally between a pair of hydrophobic residues, such as Val-|-Val.. Its function is as follows. Might be efficient in the degradation of transiently denatured and unfolded proteins which accumulate in the periplasm following stress conditions. This Pseudomonas fluorescens (strain ATCC BAA-477 / NRRL B-23932 / Pf-5) protein is Probable periplasmic serine endoprotease DegP-like (mucD).